A 566-amino-acid chain; its full sequence is Transcription factor P14E8.02 (566 aa).

The tract at residues 1–32 is disordered; that stretch reads MNISSQNVLLPSPIPSSSPMASHKKSWLSKHP. The residue at position 73 (S73) is a Phosphoserine. Residues 86-137 enclose the FHA domain; the sequence is NKIGRSSQQCDHVLSTVDKAISRVHAIVTCTQDRMIIECVGWNGMIVSDKMR. Disordered regions lie at residues 191–217, 269–291, 312–334, and 364–437; these read EENR…SQDY, DCSK…LLNG, ESDD…IEES, and FTNH…TKEN. Residues 314–330 show a composition bias toward acidic residues; it reads DDLDKNEEISEGEEYTP. Polar residues-rich tracts occupy residues 373 to 383 and 414 to 428; these read NSNITTSNDSP and DENT…PSSH. 2 positions are modified to phosphoserine: S379 and S382.

It belongs to the PLM2/TOS4 family.

The protein localises to the nucleus. Its function is as follows. Probable transcriptional regulatory protein Required for G1/S progression. This Schizosaccharomyces pombe (strain 972 / ATCC 24843) (Fission yeast) protein is Transcription factor P14E8.02.